A 173-amino-acid polypeptide reads, in one-letter code: Myeloid-derived growth factor (173 aa).

A signal peptide spans M1–A31.

The protein belongs to the MYDGF family. As to expression, expressed in eosinophils (at protein level). Expressed in bone marrow cells. Expressed in synovial tissue. Found in synovial fluid of patients with arthropaties.

It localises to the secreted. The protein localises to the endoplasmic reticulum-Golgi intermediate compartment. Its subcellular location is the endoplasmic reticulum. The protein resides in the golgi apparatus. Functionally, bone marrow-derived monocyte and paracrine-acting protein that promotes cardiac myocyte survival and adaptive angiogenesis for cardiac protection and/or repair after myocardial infarction (MI). Stimulates endothelial cell proliferation through a MAPK1/3-, STAT3- and CCND1-mediated signaling pathway. Inhibits cardiac myocyte apoptosis in a PI3K/AKT-dependent signaling pathway. Involved in endothelial cell proliferation and angiogenesis. This is Myeloid-derived growth factor from Homo sapiens (Human).